Consider the following 131-residue polypeptide: Ribonuclease VapC3 (131 aa).

The 118-residue stretch at 4–121 (VVDASAIAAL…GKLLTLDRQL (118 aa)) folds into the PINc domain. Residues aspartate 6, aspartate 100, and aspartate 118 each contribute to the Mg(2+) site.

This sequence belongs to the PINc/VapC protein family. Homodimer. Forms a complex with putative antitoxin VapB3, possibly VapB(2)-VapC(2). It depends on Mg(2+) as a cofactor.

Its activity is regulated as follows. Inhibited by EDTA. Its function is as follows. Toxic component of a type II toxin-antitoxin (TA) system. Has ribonuclease activity. In Pyrobaculum aerophilum (strain ATCC 51768 / DSM 7523 / JCM 9630 / CIP 104966 / NBRC 100827 / IM2), this protein is Ribonuclease VapC3.